Consider the following 216-residue polypeptide: Cyclic AMP receptor protein (216 aa).

Position 6 to 126 (6 to 126) interacts with a nucleoside 3',5'-cyclic phosphate; the sequence is LFHGLAPEEV…HNLAALLARR (121 aa). 3',5'-cyclic AMP-binding positions include 75-78 and 85-86; these read GEMS and RS. Residues 140 to 206 form the HTH crp-type domain; that stretch reads EEARNRVAYA…PGTVEVREAA (67 aa). A DNA-binding region (H-T-H motif) is located at residues 166 to 185; sequence HHELAALAGTSRETVSRVLH.

As to quaternary structure, homodimer.

Functionally, activates transcription. Positively regulates six promoters upstream of the TTHB186, TTHB147, TTHB178, TTHB159, TTHA0771 and TTHA0176 genes in a cAMP-dependent manner. Regulated genes include clustered regularly interspaced short palindromic repeat (CRISPR) associated (Cas) genes, and the genes encoding a putative transcriptional regulator, a protein containing the exonuclease III-like domain of DNA polymerase, a GCN5-related acetyltransferase homolog, and some T.thermophilus-specific proteins of unknown function. The consensus DNA-binding site of this transcriptional regulator is 5'-(CT)NNG(G/T)(G/T)C(A/C)N(A/T)NNTCACAN(G/C)(G/C)-3' in which N is G, A, T or C. This chain is Cyclic AMP receptor protein, found in Thermus thermophilus (strain ATCC 27634 / DSM 579 / HB8).